The primary structure comprises 436 residues: 3-ketoacyl-CoA thiolase (436 aa).

The active-site Acyl-thioester intermediate is cysteine 99. Active-site proton acceptor residues include histidine 392 and cysteine 422.

This sequence belongs to the thiolase-like superfamily. Thiolase family. As to quaternary structure, heterotetramer of two alpha chains (FadJ) and two beta chains (FadI).

Its subcellular location is the cytoplasm. It carries out the reaction an acyl-CoA + acetyl-CoA = a 3-oxoacyl-CoA + CoA. The protein operates within lipid metabolism; fatty acid beta-oxidation. Its function is as follows. Catalyzes the final step of fatty acid oxidation in which acetyl-CoA is released and the CoA ester of a fatty acid two carbons shorter is formed. The sequence is that of 3-ketoacyl-CoA thiolase from Salmonella typhimurium (strain LT2 / SGSC1412 / ATCC 700720).